The primary structure comprises 1862 residues: Ankyrin-1 (1862 aa).

The 89 kDa domain stretch occupies residues 1–827 (MGFCKADAAT…DELVGSKAER (827 aa)). ANK repeat units lie at residues 40-69 (NGLNGLHLASKEGHVKMVVELLHKEIILET), 73-102 (KGNTALHIAALAGQDEVVRELVNYGANVNA), 106-135 (KGFTPLYMAAQENHLEVVKFLLENGANQNV), 139-168 (DGFTPLAVALQQGHENVVAHLINYGTKGKV), 170-197 (LPALHIAARNDDTRTAAVLLQNDPNPDV), 201-230 (TGFTPLHIAAHYENLNVAQLLLNRGASVNF), 234-263 (NGITPLHIASRRGNVIMVRLLLDRGAQIET), 267-296 (DELTPLHCAARNGHVRISEILLDHGAPIQA), 300-329 (NGLSPIHMAAQGDHLDCVRLLLQYNAEIDD), 333-362 (DHLTPLHVAAHCGHHRVAKVLLDKGAKPNS), 366-395 (NGFTPLHIACKKNHIRVMELLLKTGASIDA), 399-428 (SGLTPLHVASFMGHLPIVKNLLQRGASPNV), 432-461 (KVETPLHMAARAGHTEVAKYLLQNKAKANA), 465-494 (DDQTPLHCAARIGHTGMVKLLLENGASPNL), 498-527 (AGHTPLHTAAREGHVDTALALLEKEASQAC), 531-560 (KGFTPLHVAAKYGKVRLAELLLEHDAHPNA), 564-593 (NGLTPLHVAVHHNNLDIVKLLLPRGGSPHS), 597-626 (NGYTPLHIAAKQNQIEVARSLLQYGGSANA), 630-659 (QGVTPLHLAAQEGHTEMVALLLSKQANGNL), 663-692 (SGLTPLHLVSQEGHVPVADVLIKHGVTVDA), 696-725 (MGYTPLHVASHYGNIKLVKFLLQHQADVNA), 729-758 (LGYSPLHQAAQQGHTDIVTLLLKNGASPNE), and 762-791 (NGTTPLAIAKRLGYISVTDVLKVVTDETSV). Residue lysine 55 is modified to Phosphoserine. Asparagine 101 is subject to (3S)-3-hydroxyasparagine; by HIF1AN; partial. (3S)-3-hydroxyasparagine; by HIF1AN is present on asparagine 229. Residue serine 425 is modified to Phosphoserine. (3S)-3-hydroxyasparagine; by HIF1AN is present on residues asparagine 427 and asparagine 460. 2 positions are modified to (3S)-3-hydroxyasparagine; by HIF1AN: asparagine 625 and asparagine 658. At aspartate 691 the chain carries (3S)-3-hydroxyaspartate; by HIF1AN. Position 724 is a (3S)-3-hydroxyasparagine; by HIF1AN (asparagine 724). Residue serine 755 is modified to Phosphoserine. Asparagine 757 is subject to (3S)-3-hydroxyasparagine; by HIF1AN. A phosphoserine mark is found at serine 777, serine 813, serine 830, and serine 852. The tract at residues 812–834 (VSEDEGDELVGSKAERRDSRDVG) is disordered. The span at 824–834 (KAERRDSRDVG) shows a compositional bias: basic and acidic residues. Threonine 862 carries the phosphothreonine modification. The segment at 872-900 (DQEQASKEYDEDSLIPSSPATETSDNISP) is disordered. Residues 886–900 (IPSSPATETSDNISP) are compositionally biased toward polar residues. 2 ZU5 domains span residues 909-1064 (FLVS…IMSR) and 1066-1212 (CQDY…LSDC). Threonine 957 is subject to Phosphothreonine. Tyrosine 1069 is modified (phosphotyrosine). Serine 1078 bears the Phosphoserine mark. The UPA domain stretch occupies residues 1197-1331 (ANFTTNVSAR…PVKVRDSSRE (135 aa)). Threonine 1374 and threonine 1376 each carry phosphothreonine. Phosphoserine is present on residues serine 1386 and serine 1388. The segment at 1387–1862 (ESRLGFTSDT…KRASLKRGKQ (476 aa)) is 55 kDa regulatory domain. A Phosphothreonine modification is found at threonine 1396. Residues 1399–1483 (VEMRMAVIRE…EIVNMLEGSG (85 aa)) form the Death domain. Serine 1424, serine 1473, and serine 1482 each carry phosphoserine. Residues 1481–1506 (GSGRQSRNLKPERRHGDREYSLSPSQ) are disordered. Residues 1489-1500 (LKPERRHGDREY) are compositionally biased toward basic and acidic residues. Residues serine 1519, serine 1529, and serine 1612 each carry the phosphoserine modification. Disordered regions lie at residues 1598–1720 (EGAH…GPHS) and 1744–1767 (VSTREHVQRGPPETGSPKAGKEPS). A compositionally biased stretch (basic and acidic residues) spans 1637–1647 (EGQRSEKKRQE). Polar residues predominate over residues 1648–1666 (VSGTEQDTETEVSLVSGQQ). Phosphoserine occurs at positions 1660, 1675, and 1685. Residues 1681–1694 (VLDRSQARTLDWDK) are compositionally biased toward basic and acidic residues. Residues 1695–1720 (QGSTAVHPQEATQSSWQEEVTQGPHS) are compositionally biased toward polar residues.

As to quaternary structure, component of the ankyrin-1 complex in the erythrocyte, composed of ANK1, RHCE, RHAG, SLC4A1, EPB42, GYPA, GYPB and AQP1. Interacts with a number of integral membrane proteins and cytoskeletal proteins. Interacts (via N-terminus) with SPTB/spectrin (beta chain). Also interacts with TTN/titin. Isoform Mu17 interacts with OBSCN isoform 3/obscurin. Interacts with HIF1AN. Interacts (via ANK 1-5 repeats) with RHCE; this interaction mediates the primary membrane attachment site for ANK1. Interacts (via ANK 1-2 repeats) with AQP1 (via the N-terminal). Interacts (via ANK 1-13 repeats) with EPB42. Interacts directly with SLC4A1 (via the cytoplasmic domain); this interaction is mediated by the SLC4A1 Band 3-II and Band 3-III dimers. Post-translationally, regulated by phosphorylation. In terms of processing, acylated by palmitic acid group(s). Hydroxylated by HIF1AN at several asparagine and 1 aspartate residue within ANK repeat region; hydroxylation seems to increase the conformational stability of this region and may also modulate protein-protein interactions mediated by the ANK repeat region.

The protein localises to the cytoplasm. It is found in the cytoskeleton. It localises to the membrane. Its subcellular location is the sarcoplasmic reticulum. In terms of biological role, component of the ankyrin-1 complex, a multiprotein complex involved in the stability and shape of the erythrocyte membrane. Attaches integral membrane proteins to cytoskeletal elements; binds to the erythrocyte membrane protein band 4.2, to Na-K ATPase, to the lymphocyte membrane protein GP85, and to the cytoskeletal proteins fodrin, tubulin, vimentin and desmin. Erythrocyte ankyrins also link spectrin (beta chain) to the cytoplasmic domain of the erythrocytes anion exchange protein; they retain most or all of these binding functions. This Mus musculus (Mouse) protein is Ankyrin-1.